Consider the following 200-residue polypeptide: MVHAFLIHTLRAPNTEDTGLCRVLYSCVFGAEKSPDDPRPHGAERDRLLRKEQILAVARQVESMCRLQQQASGRPPMDLQPQSSDEQVPLHEAPRGAFRLAAENPFQEPRTVVWLGVLSLGFALVLDAHENLLLAEGTLRLLTRLLLDHLRLLAPSTSLLLRADRIEGILTRFLPHGQLLFLNDQFVQGLEKEFSAAWPR.

In terms of assembly, probably part of the adaptor protein complex 5 (AP-5) a tetramer composed of AP5B1, AP5M1, AP5S1 and AP5Z1. Interacts with ZFYVE26 and SPG11.

The protein resides in the cytoplasm. It localises to the cytosol. The protein localises to the late endosome membrane. Its subcellular location is the lysosome membrane. As part of AP-5, a probable fifth adaptor protein complex it may be involved in endosomal transport. According to PubMed:20613862, it is required for efficient homologous recombination DNA double-strand break repair. The chain is AP-5 complex subunit sigma-1 (AP5S1) from Homo sapiens (Human).